A 148-amino-acid polypeptide reads, in one-letter code: Large ribosomal subunit protein bL9 (148 aa).

The protein belongs to the bacterial ribosomal protein bL9 family.

Binds to the 23S rRNA. The sequence is that of Large ribosomal subunit protein bL9 from Dechloromonas aromatica (strain RCB).